The chain runs to 292 residues: 4-hydroxybenzoate octaprenyltransferase (292 aa).

8 consecutive transmembrane segments (helical) span residues 20–40 (IGIL…ADGM), 43–63 (PMIL…GCAI), 94–114 (LLIA…LNLL), 135–155 (FFAM…PMAF), 160–180 (GTVP…VIAY), 209–229 (VAGI…AGIL), 234–254 (IWFY…YGMI), and 266–286 (FLHN…DTLF).

It belongs to the UbiA prenyltransferase family. Mg(2+) serves as cofactor.

It is found in the cell inner membrane. The enzyme catalyses all-trans-octaprenyl diphosphate + 4-hydroxybenzoate = 4-hydroxy-3-(all-trans-octaprenyl)benzoate + diphosphate. Its pathway is cofactor biosynthesis; ubiquinone biosynthesis. Its function is as follows. Catalyzes the prenylation of para-hydroxybenzoate (PHB) with an all-trans polyprenyl group. Mediates the second step in the final reaction sequence of ubiquinone-8 (UQ-8) biosynthesis, which is the condensation of the polyisoprenoid side chain with PHB, generating the first membrane-bound Q intermediate 3-octaprenyl-4-hydroxybenzoate. In Nitrosomonas europaea (strain ATCC 19718 / CIP 103999 / KCTC 2705 / NBRC 14298), this protein is 4-hydroxybenzoate octaprenyltransferase.